We begin with the raw amino-acid sequence, 605 residues long: Alpha-amylase (605 aa).

The first 33 residues, 1-33 (MGVRRSLAALLAALLGCATSLVALTVAASPAHA), serve as a signal peptide directing secretion. Residues Asn-130 and Asp-189 each coordinate Ca(2+). Catalysis depends on Asp-219, which acts as the Nucleophile. His-223 contacts Ca(2+). Glu-253 acts as the Proton donor in catalysis. Residues 500–605 (GDDCTTVTAR…CSQNFYDSWR (106 aa)) enclose the CBM20 domain.

This sequence belongs to the glycosyl hydrolase 13 family. Monomer. Ca(2+) is required as a cofactor.

It catalyses the reaction Endohydrolysis of (1-&gt;4)-alpha-D-glucosidic linkages in polysaccharides containing three or more (1-&gt;4)-alpha-linked D-glucose units.. The protein is Alpha-amylase (tam) of Thermomonospora curvata.